The following is a 167-amino-acid chain: SsrA-binding protein (167 aa).

Positions 139–158 (QNHDKRDAAKDRDWQRDKQR) are enriched in basic and acidic residues. Residues 139–167 (QNHDKRDAAKDRDWQRDKQRVMRRHNRDA) are disordered.

The protein belongs to the SmpB family.

The protein localises to the cytoplasm. Functionally, required for rescue of stalled ribosomes mediated by trans-translation. Binds to transfer-messenger RNA (tmRNA), required for stable association of tmRNA with ribosomes. tmRNA and SmpB together mimic tRNA shape, replacing the anticodon stem-loop with SmpB. tmRNA is encoded by the ssrA gene; the 2 termini fold to resemble tRNA(Ala) and it encodes a 'tag peptide', a short internal open reading frame. During trans-translation Ala-aminoacylated tmRNA acts like a tRNA, entering the A-site of stalled ribosomes, displacing the stalled mRNA. The ribosome then switches to translate the ORF on the tmRNA; the nascent peptide is terminated with the 'tag peptide' encoded by the tmRNA and targeted for degradation. The ribosome is freed to recommence translation, which seems to be the essential function of trans-translation. This Xanthomonas euvesicatoria pv. vesicatoria (strain 85-10) (Xanthomonas campestris pv. vesicatoria) protein is SsrA-binding protein.